A 295-amino-acid polypeptide reads, in one-letter code: Elongation factor Ts (295 aa).

The segment at 79-82 is involved in Mg(2+) ion dislocation from EF-Tu; the sequence is TDFV.

The protein belongs to the EF-Ts family.

Its subcellular location is the cytoplasm. Associates with the EF-Tu.GDP complex and induces the exchange of GDP to GTP. It remains bound to the aminoacyl-tRNA.EF-Tu.GTP complex up to the GTP hydrolysis stage on the ribosome. This chain is Elongation factor Ts, found in Mycoplasma capricolum subsp. capricolum (strain California kid / ATCC 27343 / NCTC 10154).